The sequence spans 508 residues: Pentatricopeptide repeat-containing protein At5g48730, chloroplastic (508 aa).

Positions 1-10 (MVSLSTSTSH) are enriched in polar residues. A disordered region spans residues 1-22 (MVSLSTSTSHAPPLPTNRRTAE). Residues 1–28 (MVSLSTSTSHAPPLPTNRRTAERTFTVR) constitute a chloroplast transit peptide. PPR repeat units lie at residues 149-183 (NVGI…GCVV), 184-214 (NHEV…MKSS), 220-254 (DVHT…GIRP), 255-290 (NTIT…DCKP), 291-325 (DSWT…GIEP), 326-360 (NIRT…HYSW), 361-395 (TIVT…RIFP), 396-430 (SCVT…DIRL), 431-465 (DLVF…GFKP), and 466-500 (DKIT…GEAQ).

Belongs to the PPR family. P subfamily.

It is found in the plastid. It localises to the chloroplast. This chain is Pentatricopeptide repeat-containing protein At5g48730, chloroplastic, found in Arabidopsis thaliana (Mouse-ear cress).